A 28-amino-acid polypeptide reads, in one-letter code: Putative antitoxin AF_1079 (28 aa).

This sequence belongs to the UPF0165 family.

Its function is as follows. Possibly the antitoxin component of a type II toxin-antitoxin (TA) system. The polypeptide is Putative antitoxin AF_1079 (Archaeoglobus fulgidus (strain ATCC 49558 / DSM 4304 / JCM 9628 / NBRC 100126 / VC-16)).